A 584-amino-acid polypeptide reads, in one-letter code: Alkaline nuclease (584 aa).

The disordered stretch occupies residues 409–430 (GGGADHHLRGSPGDSPPPIPFE).

It belongs to the herpesviridae alkaline nuclease family. As to quaternary structure, interacts with major DNA-binding protein; this interaction increases the nuclease processivity of the alkaline exonuclease.

The protein resides in the host nucleus. It is found in the host cytoplasm. Its function is as follows. Plays a role in processing non linear or branched viral DNA intermediates in order to promote the production of mature packaged unit-length linear progeny viral DNA molecules. Exhibits endonuclease and exonuclease activities and accepts both double-stranded and single-stranded DNA as substrate. Exonuclease digestion of DNA is in the 5'-&gt; 3' direction and the products are 5'-monophosphate nucleosides. Additionally, forms a recombinase with the major DNA-binding protein, which displays strand exchange activity. The protein is Alkaline nuclease (UL98) of Human cytomegalovirus (strain AD169) (HHV-5).